The sequence spans 353 residues: Protein MGF 360-9L (353 aa).

Belongs to the asfivirus MGF 360 family. In terms of assembly, interacts with host STAT1; this interaction mediates STAT1 degradation through apoptosis. Interacts with host STAT2; this interaction mediates STAT2 degradation through the proteasome.

Its subcellular location is the host cytoplasm. Its function is as follows. Plays a role in virus cell tropism, and may be required for efficient virus replication in macrophages. In addition, inhibits IFN-beta-induced IFN-stimulated genes (ISGs) transcription. Mechanistically, degrades host STAT1 and STAT2 through apoptosis and ubiquitin-proteasome pathways respectively. This African swine fever virus (isolate Tick/Malawi/Lil 20-1/1983) (ASFV) protein is Protein MGF 360-9L.